The primary structure comprises 191 residues: Large ribosomal subunit protein bL9 (191 aa).

Residues 149–191 (EEAERQSKGESLTSADAIYGVDEDALRPEDFFDPEADGNEDDE) form a disordered region. The span at 179–191 (FFDPEADGNEDDE) shows a compositional bias: acidic residues.

Belongs to the bacterial ribosomal protein bL9 family.

Its function is as follows. Binds to the 23S rRNA. This is Large ribosomal subunit protein bL9 (rplI) from Agrobacterium fabrum (strain C58 / ATCC 33970) (Agrobacterium tumefaciens (strain C58)).